Consider the following 63-residue polypeptide: Large ribosomal subunit protein uL29 (63 aa).

It belongs to the universal ribosomal protein uL29 family.

The sequence is that of Large ribosomal subunit protein uL29 from Pseudoalteromonas translucida (strain TAC 125).